Reading from the N-terminus, the 895-residue chain is Microsomal triglyceride transfer protein large subunit (895 aa).

A signal peptide spans 1–18; that stretch reads MILLAVLFLCFFSSYSAS. The 632-residue stretch at 28-659 folds into the Vitellogenin domain; it reads LNNERLYKLT…VFQYLGKAGL (632 aa). Cys-174 and Cys-194 are oxidised to a cystine.

Heterodimer; heterodimerizes with the protein disulfide isomerase (P4HB/PDI). Interacts with APOB. Interacts with PRAP1.

The protein resides in the endoplasmic reticulum. Its subcellular location is the golgi apparatus. It catalyses the reaction a 1,2-diacyl-sn-glycero-3-phosphocholine(in) = a 1,2-diacyl-sn-glycero-3-phosphocholine(out). It carries out the reaction a 1,2-diacyl-sn-glycero-3-phosphoethanolamine(in) = a 1,2-diacyl-sn-glycero-3-phosphoethanolamine(out). The catalysed reaction is a cholesterol ester(in) = a cholesterol ester(out). The enzyme catalyses a triacyl-sn-glycerol(in) = a triacyl-sn-glycerol(out). In terms of biological role, catalyzes the transport of triglyceride, cholesteryl ester, and phospholipid between phospholipid surfaces. Required for the assembly and secretion of plasma lipoproteins that contain apolipoprotein B. May be involved in regulating cholesteryl ester biosynthesis in cells that produce lipoproteins. This chain is Microsomal triglyceride transfer protein large subunit (MTTP), found in Mesocricetus auratus (Golden hamster).